A 244-amino-acid chain; its full sequence is 5-oxoprolinase subunit A (244 aa).

The protein belongs to the LamB/PxpA family. Forms a complex composed of PxpA, PxpB and PxpC.

The enzyme catalyses 5-oxo-L-proline + ATP + 2 H2O = L-glutamate + ADP + phosphate + H(+). Its function is as follows. Catalyzes the cleavage of 5-oxoproline to form L-glutamate coupled to the hydrolysis of ATP to ADP and inorganic phosphate. The chain is 5-oxoprolinase subunit A from Escherichia fergusonii (strain ATCC 35469 / DSM 13698 / CCUG 18766 / IAM 14443 / JCM 21226 / LMG 7866 / NBRC 102419 / NCTC 12128 / CDC 0568-73).